The sequence spans 642 residues: Threonine--tRNA ligase (642 aa).

Residues 1–63 (MNDITVTLPD…YNDARVVIVT (63 aa)) enclose the TGS domain. A catalytic region spans residues 242–533 (DHRKIGQELD…LIEHFNGKFP (292 aa)). Residues cysteine 334, histidine 385, and histidine 510 each contribute to the Zn(2+) site.

This sequence belongs to the class-II aminoacyl-tRNA synthetase family. Homodimer. Zn(2+) is required as a cofactor.

The protein localises to the cytoplasm. It carries out the reaction tRNA(Thr) + L-threonine + ATP = L-threonyl-tRNA(Thr) + AMP + diphosphate + H(+). In terms of biological role, catalyzes the attachment of threonine to tRNA(Thr) in a two-step reaction: L-threonine is first activated by ATP to form Thr-AMP and then transferred to the acceptor end of tRNA(Thr). This chain is Threonine--tRNA ligase, found in Haloquadratum walsbyi (strain DSM 16790 / HBSQ001).